Consider the following 594-residue polypeptide: CDPK-related kinase 4 (594 aa).

Residues 1–131 (MGHCYSRNIS…DSGGGERLDK (131 aa)) form a disordered region. Residue Gly-2 is the site of N-myristoyl glycine attachment. Polar residues predominate over residues 37–58 (IPQSPVASGTPEVNSYNISPFQ). The segment covering 116 to 131 (VVDHGGDSGGGERLDK) has biased composition (basic and acidic residues). The Protein kinase domain occupies 143 to 405 (YELGKEVGRG…AAQALAHPWL (263 aa)). Residues 149 to 157 (VGRGHFGHT) and Lys-175 each bind ATP. The Proton acceptor role is filled by Asp-271. Residue Ser-311 is modified to Phosphoserine. The interval 409–439 (NPGLLLDFSVYKLVKSYIRASPFRRSALKAL) is autoinhibitory domain. The calmodulin binding (CaMBD) stretch occupies residues 428–448 (ASPFRRSALKALSKAIPDEEL). EF-hand domains are found at residues 446 to 481 (EELVFLKAQFMLLDPKDGGLSLNCFTMALTRYATDA), 482 to 517 (MMESRLPDILNTMQPLAQKKLDFEEFCAAAVSVYQL), 518 to 557 (EALEEWEQIATSAFEHFEHEGNRIISVQELAGEMSVGPSA), and 558 to 587 (YPLLKDWIRSSDGKLSFLGYAKFLHGVTVR). Positions 462, 501, 506, 539, 546, 567, 569, and 571 each coordinate Ca(2+). At Ser-573 the chain carries Phosphoserine.

This sequence belongs to the protein kinase superfamily. Ser/Thr protein kinase family. CDPK subfamily. Binds calmodulin (CaM) in a calcium-dependent manner. Post-translationally, autophosphorylated.

Its subcellular location is the cell membrane. The enzyme catalyses L-seryl-[protein] + ATP = O-phospho-L-seryl-[protein] + ADP + H(+). It carries out the reaction L-threonyl-[protein] + ATP = O-phospho-L-threonyl-[protein] + ADP + H(+). Activated by calcium and calmodulin. Autophosphorylation may play an important role in the regulation of the kinase activity. Its function is as follows. May play a role in signal transduction pathways that involve calcium as a second messenger. This chain is CDPK-related kinase 4 (CRK4), found in Arabidopsis thaliana (Mouse-ear cress).